The sequence spans 244 residues: Flagellar L-ring protein (244 aa).

Residues 1 to 18 (MNMRVFIFLIFAAASVSA) form the signal peptide. Residue Cys19 is the site of N-palmitoyl cysteine attachment. A lipid anchor (S-diacylglycerol cysteine) is attached at Cys19.

This sequence belongs to the FlgH family. In terms of assembly, the basal body constitutes a major portion of the flagellar organelle and consists of four rings (L,P,S, and M) mounted on a central rod.

Its subcellular location is the cell outer membrane. It localises to the bacterial flagellum basal body. Functionally, assembles around the rod to form the L-ring and probably protects the motor/basal body from shearing forces during rotation. The polypeptide is Flagellar L-ring protein (Jannaschia sp. (strain CCS1)).